Here is a 393-residue protein sequence, read N- to C-terminus: S-adenosylmethionine synthase (393 aa).

ATP is bound at residue histidine 16. Aspartate 18 contacts Mg(2+). Glutamate 44 contributes to the K(+) binding site. Residues glutamate 57 and glutamine 100 each contribute to the L-methionine site. Positions 100-110 are flexible loop; that stretch reads QSNDIAQGVDH. Residues 167–169, 238–239, aspartate 247, 253–254, alanine 270, and lysine 274 contribute to the ATP site; these read DAK, RF, and RK. Residue aspartate 247 participates in L-methionine binding. Lysine 278 serves as a coordination point for L-methionine.

This sequence belongs to the AdoMet synthase family. As to quaternary structure, homotetramer; dimer of dimers. Requires Mg(2+) as cofactor. K(+) is required as a cofactor.

It localises to the cytoplasm. The enzyme catalyses L-methionine + ATP + H2O = S-adenosyl-L-methionine + phosphate + diphosphate. The protein operates within amino-acid biosynthesis; S-adenosyl-L-methionine biosynthesis; S-adenosyl-L-methionine from L-methionine: step 1/1. Its function is as follows. Catalyzes the formation of S-adenosylmethionine (AdoMet) from methionine and ATP. The overall synthetic reaction is composed of two sequential steps, AdoMet formation and the subsequent tripolyphosphate hydrolysis which occurs prior to release of AdoMet from the enzyme. The protein is S-adenosylmethionine synthase of Paracidovorax citrulli (strain AAC00-1) (Acidovorax citrulli).